The primary structure comprises 245 residues: Transcription factor FUP7 (245 aa).

Positions 10-37 form a DNA-binding region, zn(2)-C6 fungal-type; sequence CKTCRSRKQKCDGIRPACSRCRSLGLQC. Residues 162–216 are disordered; it reads ESSSGNADYQHEDEVQSPAGAGDDMAVGDPYRDDSVDQDSIGQPPQRTESVGNMQ. Residues 199–214 show a composition bias toward polar residues; it reads QDSIGQPPQRTESVGN.

The protein localises to the nucleus. Its function is as follows. Transcription factor; part of the gene cluster that mediates the biosynthesis of the mycotoxin fusaproliferin (FUP) that belongs to the class of bicyclic sesterterpenoids. The sequence is that of Transcription factor FUP7 from Fusarium proliferatum (strain ET1) (Orchid endophyte fungus).